Consider the following 280-residue polypeptide: Dermonecrotic toxin LgSicTox-alphaIA1 (280 aa).

The active site involves His12. Positions 32 and 34 each coordinate Mg(2+). His48 (nucleophile) is an active-site residue. A disulfide bond links Cys52 and Cys58. Mg(2+) is bound at residue Asp92.

It belongs to the arthropod phospholipase D family. Class I subfamily. It depends on Mg(2+) as a cofactor. In terms of tissue distribution, expressed by the venom gland.

Its subcellular location is the secreted. It catalyses the reaction an N-(acyl)-sphingosylphosphocholine = an N-(acyl)-sphingosyl-1,3-cyclic phosphate + choline. The catalysed reaction is an N-(acyl)-sphingosylphosphoethanolamine = an N-(acyl)-sphingosyl-1,3-cyclic phosphate + ethanolamine. It carries out the reaction a 1-acyl-sn-glycero-3-phosphocholine = a 1-acyl-sn-glycero-2,3-cyclic phosphate + choline. The enzyme catalyses a 1-acyl-sn-glycero-3-phosphoethanolamine = a 1-acyl-sn-glycero-2,3-cyclic phosphate + ethanolamine. In terms of biological role, dermonecrotic toxins cleave the phosphodiester linkage between the phosphate and headgroup of certain phospholipids (sphingolipid and lysolipid substrates), forming an alcohol (often choline) and a cyclic phosphate. This toxin acts on sphingomyelin (SM). It may also act on ceramide phosphoethanolamine (CPE), lysophosphatidylcholine (LPC) and lysophosphatidylethanolamine (LPE), but not on lysophosphatidylserine (LPS), and lysophosphatidylglycerol (LPG). It acts by transphosphatidylation, releasing exclusively cyclic phosphate products as second products. Induces dermonecrosis, hemolysis, increased vascular permeability, edema, inflammatory response, and platelet aggregation. The chain is Dermonecrotic toxin LgSicTox-alphaIA1 from Loxosceles gaucho (Spider).